The following is a 457-amino-acid chain: Probable ubiquitin carboxyl-terminal hydrolase 16 (457 aa).

The tract at residues 34 to 97 (VSSPSVPEGT…DGANDFVDED (64 aa)) is disordered. Over residues 45–67 (TVLNNPKQSTVSRKSFSAPTSPT) the composition is skewed to polar residues. S61 carries the phosphoserine modification. Residue T64 is modified to Phosphothreonine. Position 65 is a phosphoserine (S65). One can recognise a USP domain in the interval 125–429 (PGLVNLGNTC…QAYILQYKRK (305 aa)). The active-site Nucleophile is the C134. H388 functions as the Proton acceptor in the catalytic mechanism. The segment at 434–457 (SKHKLNTENTVTKTSNKKRRKISF) is disordered. A compositionally biased stretch (basic residues) spans 448 to 457 (SNKKRRKISF).

This sequence belongs to the peptidase C19 family.

It catalyses the reaction Thiol-dependent hydrolysis of ester, thioester, amide, peptide and isopeptide bonds formed by the C-terminal Gly of ubiquitin (a 76-residue protein attached to proteins as an intracellular targeting signal).. This is Probable ubiquitin carboxyl-terminal hydrolase 16 (ubp16) from Schizosaccharomyces pombe (strain 972 / ATCC 24843) (Fission yeast).